A 310-amino-acid polypeptide reads, in one-letter code: tRNA dimethylallyltransferase (310 aa).

Position 14–21 (14–21) interacts with ATP; it reads GPTASGKS. 16–21 contributes to the substrate binding site; the sequence is TASGKS. Interaction with substrate tRNA stretches follow at residues 39-42 and 163-167; these read DSMQ and QRIVR.

The protein belongs to the IPP transferase family. Monomer. Requires Mg(2+) as cofactor.

It catalyses the reaction adenosine(37) in tRNA + dimethylallyl diphosphate = N(6)-dimethylallyladenosine(37) in tRNA + diphosphate. Functionally, catalyzes the transfer of a dimethylallyl group onto the adenine at position 37 in tRNAs that read codons beginning with uridine, leading to the formation of N6-(dimethylallyl)adenosine (i(6)A). In Brucella suis biovar 1 (strain 1330), this protein is tRNA dimethylallyltransferase.